The primary structure comprises 154 residues: Minor structural pilin EpdC (154 aa).

Residues 1-13 constitute a propeptide that is removed on maturation; sequence MIKMLQLPFNKKG. Positions 14-24 match the QXSXEXXXL motif; the sequence is QVSFDFIIAML.

In terms of processing, the N-terminus is cleaved by the prepilin peptidase EppA, which recognizes the class III signal sequence.

The protein resides in the secreted. It localises to the cell surface. It is found in the fimbrium. Functionally, minor component of the type IV-like pili. Essential for pili formation. In Methanococcus maripaludis (strain DSM 14266 / JCM 13030 / NBRC 101832 / S2 / LL), this protein is Minor structural pilin EpdC.